The chain runs to 107 residues: Basic phospholipase A2 sphenotoxin subunit B (107 aa).

Ca(2+) contacts are provided by Y27, G29, and G31. 5 disulfide bridges follow: C28/C44, C43/C91, C50/C88, C57/C81, and C75/C86. H47 is an active-site residue. Residue D48 coordinates Ca(2+). D89 is an active-site residue.

This sequence belongs to the phospholipase A2 family. Group II subfamily. D49 sub-subfamily. In terms of assembly, heterodimer of A and B chains; non-covalently linked. The acidic protein (B chain) has phospholipase A2 activity and the A chain weakly inhibits the B chain enzymatic activity but potentiates its lethal potency. In terms of tissue distribution, expressed by the venom gland.

The protein localises to the secreted. It catalyses the reaction a 1,2-diacyl-sn-glycero-3-phosphocholine + H2O = a 1-acyl-sn-glycero-3-phosphocholine + a fatty acid + H(+). Functionally, heterodimer A-B: Sphenotoxin is a potent neurotoxin that possesses phospholipase A2 (PLA2) activity. It consists of a non-covalent association of a basic PLA2 subunit B with a non-enzymatic subunit A. In terms of biological role, monomer B: Not found in vivo. In vitro, potent neurotoxin that possesses phospholipase A2 (PLA2) activity and exerts a lethal action by blocking neuromuscular transmission. Induces paralysis of the hind legs and neuromuscular blockade in mouse phrenic nerve-diaphragm preparations. PLA2 catalyzes the calcium-dependent hydrolysis of the 2-acyl groups in 3-sn-phosphoglycerides. The chain is Basic phospholipase A2 sphenotoxin subunit B from Ophryacus sphenophrys (Broad-horned pitviper).